The chain runs to 860 residues: DNA mismatch repair protein MutS (860 aa).

620 to 627 (GPNMGGKS) lines the ATP pocket.

Belongs to the DNA mismatch repair MutS family.

Functionally, this protein is involved in the repair of mismatches in DNA. It is possible that it carries out the mismatch recognition step. This protein has a weak ATPase activity. This is DNA mismatch repair protein MutS from Dechloromonas aromatica (strain RCB).